Here is a 740-residue protein sequence, read N- to C-terminus: Phosphoribosylformylglycinamidine synthase subunit PurL (740 aa).

Histidine 50 is a catalytic residue. Positions 53 and 92 each coordinate ATP. Glutamate 94 lines the Mg(2+) pocket. Residues 95–98 and arginine 117 contribute to the substrate site; that span reads SHNH. The Proton acceptor role is filled by histidine 96. Mg(2+) is bound at residue aspartate 118. Substrate is bound at residue glutamine 241. Aspartate 269 contributes to the Mg(2+) binding site. 313–315 serves as a coordination point for substrate; it reads ESQ. The ATP site is built by aspartate 495 and glycine 532. Position 533 (asparagine 533) interacts with Mg(2+). Serine 535 contacts substrate.

It belongs to the FGAMS family. As to quaternary structure, monomer. Part of the FGAM synthase complex composed of 1 PurL, 1 PurQ and 2 PurS subunits.

It is found in the cytoplasm. It catalyses the reaction N(2)-formyl-N(1)-(5-phospho-beta-D-ribosyl)glycinamide + L-glutamine + ATP + H2O = 2-formamido-N(1)-(5-O-phospho-beta-D-ribosyl)acetamidine + L-glutamate + ADP + phosphate + H(+). The protein operates within purine metabolism; IMP biosynthesis via de novo pathway; 5-amino-1-(5-phospho-D-ribosyl)imidazole from N(2)-formyl-N(1)-(5-phospho-D-ribosyl)glycinamide: step 1/2. In terms of biological role, part of the phosphoribosylformylglycinamidine synthase complex involved in the purines biosynthetic pathway. Catalyzes the ATP-dependent conversion of formylglycinamide ribonucleotide (FGAR) and glutamine to yield formylglycinamidine ribonucleotide (FGAM) and glutamate. The FGAM synthase complex is composed of three subunits. PurQ produces an ammonia molecule by converting glutamine to glutamate. PurL transfers the ammonia molecule to FGAR to form FGAM in an ATP-dependent manner. PurS interacts with PurQ and PurL and is thought to assist in the transfer of the ammonia molecule from PurQ to PurL. The chain is Phosphoribosylformylglycinamidine synthase subunit PurL from Brucella canis (strain ATCC 23365 / NCTC 10854 / RM-666).